Reading from the N-terminus, the 647-residue chain is Threonine--tRNA ligase (647 aa).

The TGS domain occupies M1–T63. The segment at D242–P540 is catalytic. Zn(2+) contacts are provided by C336, H387, and H517.

The protein belongs to the class-II aminoacyl-tRNA synthetase family. Homodimer. Zn(2+) is required as a cofactor.

It is found in the cytoplasm. It catalyses the reaction tRNA(Thr) + L-threonine + ATP = L-threonyl-tRNA(Thr) + AMP + diphosphate + H(+). Its function is as follows. Catalyzes the attachment of threonine to tRNA(Thr) in a two-step reaction: L-threonine is first activated by ATP to form Thr-AMP and then transferred to the acceptor end of tRNA(Thr). Also edits incorrectly charged L-seryl-tRNA(Thr). In Levilactobacillus brevis (strain ATCC 367 / BCRC 12310 / CIP 105137 / JCM 1170 / LMG 11437 / NCIMB 947 / NCTC 947) (Lactobacillus brevis), this protein is Threonine--tRNA ligase.